The following is a 297-amino-acid chain: tRNA dimethylallyltransferase (297 aa).

Residue 9–16 (GPTASGKS) coordinates ATP. Residue 11–16 (TASGKS) participates in substrate binding. Interaction with substrate tRNA regions lie at residues 34 to 37 (DSMQ) and 155 to 159 (QRVIR).

This sequence belongs to the IPP transferase family. In terms of assembly, monomer. Mg(2+) is required as a cofactor.

The catalysed reaction is adenosine(37) in tRNA + dimethylallyl diphosphate = N(6)-dimethylallyladenosine(37) in tRNA + diphosphate. In terms of biological role, catalyzes the transfer of a dimethylallyl group onto the adenine at position 37 in tRNAs that read codons beginning with uridine, leading to the formation of N6-(dimethylallyl)adenosine (i(6)A). The chain is tRNA dimethylallyltransferase from Leuconostoc mesenteroides subsp. mesenteroides (strain ATCC 8293 / DSM 20343 / BCRC 11652 / CCM 1803 / JCM 6124 / NCDO 523 / NBRC 100496 / NCIMB 8023 / NCTC 12954 / NRRL B-1118 / 37Y).